Consider the following 680-residue polypeptide: TBC1 domain family member 23 (680 aa).

A Rab-GAP TBC domain is found at 40 to 221 (DLSPPQRAKL…ALWDVYLQQA (182 aa)). Positions 330–442 (EGVRFFVVDC…LQQHLADINV (113 aa)) constitute a Rhodanese domain.

It is found in the golgi apparatus. Its subcellular location is the trans-Golgi network. The protein resides in the cytoplasmic vesicle. In terms of biological role, putative Rab GTPase-activating protein which plays a role in vesicular trafficking. Involved in endosome-to-Golgi trafficking. Acts as a bridging protein by binding simultaneously to golgins, located at the trans-Golgi, and to the WASH complex, located on endosome-derived vesicles. Plays a role in brain development. May act as a general inhibitor of innate immunity signaling. The protein is TBC1 domain family member 23 (tbc1d23) of Danio rerio (Zebrafish).